Here is a 307-residue protein sequence, read N- to C-terminus: tRNA pseudouridine synthase B (307 aa).

The Nucleophile role is filled by Asp-47.

The protein belongs to the pseudouridine synthase TruB family. Type 1 subfamily.

It catalyses the reaction uridine(55) in tRNA = pseudouridine(55) in tRNA. Functionally, responsible for synthesis of pseudouridine from uracil-55 in the psi GC loop of transfer RNAs. The sequence is that of tRNA pseudouridine synthase B from Chromohalobacter salexigens (strain ATCC BAA-138 / DSM 3043 / CIP 106854 / NCIMB 13768 / 1H11).